The primary structure comprises 314 residues: Methionyl-tRNA formyltransferase (314 aa).

Position 110–113 (110–113) interacts with (6S)-5,6,7,8-tetrahydrofolate; it reads SLLP.

Belongs to the Fmt family.

The enzyme catalyses L-methionyl-tRNA(fMet) + (6R)-10-formyltetrahydrofolate = N-formyl-L-methionyl-tRNA(fMet) + (6S)-5,6,7,8-tetrahydrofolate + H(+). Functionally, attaches a formyl group to the free amino group of methionyl-tRNA(fMet). The formyl group appears to play a dual role in the initiator identity of N-formylmethionyl-tRNA by promoting its recognition by IF2 and preventing the misappropriation of this tRNA by the elongation apparatus. The protein is Methionyl-tRNA formyltransferase of Bacillus thuringiensis subsp. konkukian (strain 97-27).